Consider the following 227-residue polypeptide: 2,3-bisphosphoglycerate-dependent phosphoglycerate mutase (227 aa).

Substrate contacts are provided by residues 7-14 (RHGFSEWN), 20-21 (TG), Arg-59, 86-89 (ERHY), Lys-97, 113-114 (RR), and 182-183 (GN). The Tele-phosphohistidine intermediate role is filled by His-8. The Proton donor/acceptor role is filled by Glu-86.

Belongs to the phosphoglycerate mutase family. BPG-dependent PGAM subfamily. As to quaternary structure, homodimer.

It catalyses the reaction (2R)-2-phosphoglycerate = (2R)-3-phosphoglycerate. The protein operates within carbohydrate degradation; glycolysis; pyruvate from D-glyceraldehyde 3-phosphate: step 3/5. Catalyzes the interconversion of 2-phosphoglycerate and 3-phosphoglycerate. The sequence is that of 2,3-bisphosphoglycerate-dependent phosphoglycerate mutase from Pasteurella multocida (strain Pm70).